The chain runs to 103 residues: Small ribosomal subunit protein uS14c (103 aa).

A disordered region spans residues 34–56 (KVSPLSLSEKTKMREKLQSLPRN).

The protein belongs to the universal ribosomal protein uS14 family. Part of the 30S ribosomal subunit.

The protein localises to the plastid. It is found in the chloroplast. Its function is as follows. Binds 16S rRNA, required for the assembly of 30S particles. This chain is Small ribosomal subunit protein uS14c, found in Triticum aestivum (Wheat).